The chain runs to 66 residues: Large ribosomal subunit protein bL33c (66 aa).

It belongs to the bacterial ribosomal protein bL33 family.

It localises to the plastid. The protein localises to the chloroplast. This chain is Large ribosomal subunit protein bL33c, found in Aethionema cordifolium (Lebanon stonecress).